The following is a 260-amino-acid chain: MADDRHGIDDIDGETLDAVAEALRTAETAVALTGAGVSTASGIPSFRGDDGIWERHDPADFHRRRLDADPAGFWADRLSLREAIYGDIDPEPNAAHEALAALEADGHLDAVLTQNIDGLHDAAGTDRVVELHGTHRRVVCDDCGHRRDAEVVFEQAAESSDLPPRCDCGGVYRPDVVLFGEPMPDVAMNEAQRLARDSDVFLAVGSSLSVQPASLLPKIAAEGDSTLVVVNYEETPRDASAAHVLRADVTQVLPAIVERL.

The Deacetylase sirtuin-type domain maps to 9–260; sequence DDIDGETLDA…QVLPAIVERL (252 aa). Positions 35, 39, 46, 47, 114, 116, 117, and 132 each coordinate NAD(+). Phe-46 is a nicotinamide binding site. Nicotinamide is bound by residues Ile-116 and Asp-117. His-132 acts as the Proton acceptor in catalysis. Cys-140, Cys-143, Cys-166, and Cys-168 together coordinate Zn(2+). NAD(+) is bound by residues Ser-206, Ser-207, Asn-231, Asp-248, and Val-249.

This sequence belongs to the sirtuin family. Class U subfamily. Requires Zn(2+) as cofactor.

It localises to the cytoplasm. It catalyses the reaction N(6)-acetyl-L-lysyl-[protein] + NAD(+) + H2O = 2''-O-acetyl-ADP-D-ribose + nicotinamide + L-lysyl-[protein]. In terms of biological role, NAD-dependent protein deacetylase which modulates the activities of several enzymes which are inactive in their acetylated form. Deacetylates the N-terminal lysine residue of Alba, the major archaeal chromatin protein and that, in turn, increases Alba's DNA binding affinity, thereby repressing transcription. This chain is NAD-dependent protein deacetylase, found in Haloarcula marismortui (strain ATCC 43049 / DSM 3752 / JCM 8966 / VKM B-1809) (Halobacterium marismortui).